A 140-amino-acid chain; its full sequence is Nucleoside diphosphate kinase (140 aa).

The ATP site is built by lysine 11, phenylalanine 59, arginine 87, threonine 93, arginine 104, and asparagine 114. Histidine 117 serves as the catalytic Pros-phosphohistidine intermediate.

The protein belongs to the NDK family. As to quaternary structure, homotetramer. It depends on Mg(2+) as a cofactor.

The protein resides in the cytoplasm. It carries out the reaction a 2'-deoxyribonucleoside 5'-diphosphate + ATP = a 2'-deoxyribonucleoside 5'-triphosphate + ADP. It catalyses the reaction a ribonucleoside 5'-diphosphate + ATP = a ribonucleoside 5'-triphosphate + ADP. Functionally, major role in the synthesis of nucleoside triphosphates other than ATP. The ATP gamma phosphate is transferred to the NDP beta phosphate via a ping-pong mechanism, using a phosphorylated active-site intermediate. The protein is Nucleoside diphosphate kinase of Methylorubrum extorquens (strain CM4 / NCIMB 13688) (Methylobacterium extorquens).